The chain runs to 461 residues: Ig heavy chain C region, membrane-bound form (461 aa).

The CH1 stretch occupies residues Ala-1–Pro-99. A CH2 region spans residues Asp-100 to Gln-205. 8 N-linked (GlcNAc...) asparagine glycosylation sites follow: Asn-164, Asn-200, Asn-245, Asn-275, Asn-374, Asn-411, Asn-415, and Asn-437. Positions Val-206 to Glu-308 are CH3. The tract at residues Val-309 to Ser-418 is CH4. Residues Ala-438–Val-458 form a helical membrane-spanning segment.

It is found in the cell membrane. This Heterodontus francisci (Horn shark) protein is Ig heavy chain C region, membrane-bound form.